We begin with the raw amino-acid sequence, 195 residues long: uncharacterized protein (195 aa).

Residues 1 to 11 (MDYIVSPTSSE) show a composition bias toward polar residues. A disordered region spans residues 1–118 (MDYIVSPTSS…LDTEGGFVLS (118 aa)). Over residues 35-46 (SPEDITDSDEQN) the composition is skewed to acidic residues. Over residues 47–63 (DTTTTTSEMSSTSSVPS) the composition is skewed to low complexity. Positions 82–93 (SDSKLIFDSDNK) are enriched in basic and acidic residues. Over residues 94 to 110 (DQDDEDDEDDEELEGLD) the composition is skewed to acidic residues.

This is an uncharacterized protein from Acanthamoeba polyphaga mimivirus (APMV).